The chain runs to 295 residues: Small ribosomal subunit protein uS2 (295 aa).

Positions 242–295 are disordered; sequence APVEPTLARELAPEAPAPEAPAEEAPAAEAAPAAEAAPAAEAAPAEASSEEQAG. Over residues 264 to 288 the composition is skewed to low complexity; sequence EEAPAAEAAPAAEAAPAAEAAPAEA.

Belongs to the universal ribosomal protein uS2 family.

In Phenylobacterium zucineum (strain HLK1), this protein is Small ribosomal subunit protein uS2.